The sequence spans 354 residues: Chorismate synthase (354 aa).

Arg-48 is an NADP(+) binding site. FMN is bound by residues 125 to 127 (RAS), Gly-277, 292 to 296 (KPIPS), and Arg-318.

It belongs to the chorismate synthase family. Homotetramer. Requires FMNH2 as cofactor.

It carries out the reaction 5-O-(1-carboxyvinyl)-3-phosphoshikimate = chorismate + phosphate. The protein operates within metabolic intermediate biosynthesis; chorismate biosynthesis; chorismate from D-erythrose 4-phosphate and phosphoenolpyruvate: step 7/7. Functionally, catalyzes the anti-1,4-elimination of the C-3 phosphate and the C-6 proR hydrogen from 5-enolpyruvylshikimate-3-phosphate (EPSP) to yield chorismate, which is the branch point compound that serves as the starting substrate for the three terminal pathways of aromatic amino acid biosynthesis. This reaction introduces a second double bond into the aromatic ring system. This Nitratidesulfovibrio vulgaris (strain DP4) (Desulfovibrio vulgaris) protein is Chorismate synthase.